Consider the following 60-residue polypeptide: Large ribosomal subunit protein uL30 (60 aa).

This sequence belongs to the universal ribosomal protein uL30 family. As to quaternary structure, part of the 50S ribosomal subunit.

This Streptococcus gordonii (strain Challis / ATCC 35105 / BCRC 15272 / CH1 / DL1 / V288) protein is Large ribosomal subunit protein uL30.